We begin with the raw amino-acid sequence, 419 residues long: UDP-N-acetylglucosamine 1-carboxyvinyltransferase (419 aa).

22–23 (KN) provides a ligand contact to phosphoenolpyruvate. UDP-N-acetyl-alpha-D-glucosamine is bound at residue arginine 95. Residue cysteine 119 is the Proton donor of the active site. The residue at position 119 (cysteine 119) is a 2-(S-cysteinyl)pyruvic acid O-phosphothioketal. Residues 164-167 (KVSV), aspartate 308, and isoleucine 330 contribute to the UDP-N-acetyl-alpha-D-glucosamine site.

This sequence belongs to the EPSP synthase family. MurA subfamily.

It is found in the cytoplasm. It catalyses the reaction phosphoenolpyruvate + UDP-N-acetyl-alpha-D-glucosamine = UDP-N-acetyl-3-O-(1-carboxyvinyl)-alpha-D-glucosamine + phosphate. Its pathway is cell wall biogenesis; peptidoglycan biosynthesis. Cell wall formation. Adds enolpyruvyl to UDP-N-acetylglucosamine. This is UDP-N-acetylglucosamine 1-carboxyvinyltransferase from Rickettsia conorii (strain ATCC VR-613 / Malish 7).